Consider the following 404-residue polypeptide: NADH-quinone oxidoreductase subunit D 2 (404 aa).

This sequence belongs to the complex I 49 kDa subunit family. In terms of assembly, NDH-1 is composed of 14 different subunits. Subunits NuoB, C, D, E, F, and G constitute the peripheral sector of the complex.

The protein localises to the cell inner membrane. It catalyses the reaction a quinone + NADH + 5 H(+)(in) = a quinol + NAD(+) + 4 H(+)(out). Its function is as follows. NDH-1 shuttles electrons from NADH, via FMN and iron-sulfur (Fe-S) centers, to quinones in the respiratory chain. The immediate electron acceptor for the enzyme in this species is believed to be ubiquinone. Couples the redox reaction to proton translocation (for every two electrons transferred, four hydrogen ions are translocated across the cytoplasmic membrane), and thus conserves the redox energy in a proton gradient. This chain is NADH-quinone oxidoreductase subunit D 2, found in Sinorhizobium medicae (strain WSM419) (Ensifer medicae).